Reading from the N-terminus, the 387-residue chain is Glutamyl-tRNA reductase 1 (387 aa).

Substrate contacts are provided by residues 45–48, S96, 101–103, and Q107; these read TCNR and ETD. The active-site Nucleophile is C46. 175 to 180 provides a ligand contact to NADP(+); the sequence is GAGSVG.

It belongs to the glutamyl-tRNA reductase family. As to quaternary structure, homodimer.

The catalysed reaction is (S)-4-amino-5-oxopentanoate + tRNA(Glu) + NADP(+) = L-glutamyl-tRNA(Glu) + NADPH + H(+). It functions in the pathway porphyrin-containing compound metabolism; protoporphyrin-IX biosynthesis; 5-aminolevulinate from L-glutamyl-tRNA(Glu): step 1/2. Catalyzes the NADPH-dependent reduction of glutamyl-tRNA(Glu) to glutamate 1-semialdehyde (GSA). The protein is Glutamyl-tRNA reductase 1 of Pyrobaculum arsenaticum (strain DSM 13514 / JCM 11321 / PZ6).